Here is a 397-residue protein sequence, read N- to C-terminus: Xylose isomerase (397 aa).

Active-site residues include histidine 54 and aspartate 57. 7 residues coordinate Mg(2+): glutamate 181, glutamate 217, histidine 220, aspartate 245, aspartate 255, aspartate 257, and aspartate 293.

The protein belongs to the xylose isomerase family. In terms of assembly, homotetramer. Mg(2+) serves as cofactor.

Its subcellular location is the cytoplasm. It carries out the reaction alpha-D-xylose = alpha-D-xylulofuranose. This Clavibacter sepedonicus (Clavibacter michiganensis subsp. sepedonicus) protein is Xylose isomerase.